Reading from the N-terminus, the 596-residue chain is Jacalin-related lectin 46 (596 aa).

The tract at residues 1 to 20 is disordered; it reads MTERSEALGKDGNRRWDDKS. 4 Jacalin-type lectin domains span residues 2–143, 146–291, 294–439, and 446–592; these read TERS…YFTR, PTRI…YFTP, PTKS…HFYP, and AEKL…HVLP.

This sequence belongs to the jacalin lectin family.

The polypeptide is Jacalin-related lectin 46 (JAL46) (Arabidopsis thaliana (Mouse-ear cress)).